The sequence spans 175 residues: Protein LAZY 3 (175 aa).

The disordered stretch occupies residues 9–39; the sequence is RKLSGKKRVPTSDSSQEPSSPPLSKEVQGLP. Positions 44–50 match the IGT motif motif; it reads TFLAIGT.

It belongs to the LAZY family. Specifically expressed in roots. Expressed in root tips of young seedlings.

In terms of biological role, involved in the regulation of root gravitropism. Functions redundantly with LAZY2 and LAZY4 in the control of root gravitropism. Functions redundantly with LAZY1, LAZY2 and LAZY4 to control plant architecture by coupling gravity sensing to the formation of auxin gradients. In Arabidopsis thaliana (Mouse-ear cress), this protein is Protein LAZY 3.